Consider the following 231-residue polypeptide: Enolase-phosphatase E1 (231 aa).

Mg(2+)-binding residues include Asp11 and Glu13. Substrate is bound by residues Ser125–Ser126 and Lys162. Asp188 serves as a coordination point for Mg(2+).

Belongs to the HAD-like hydrolase superfamily. MasA/MtnC family. In terms of assembly, monomer. The cofactor is Mg(2+).

The protein localises to the cytoplasm. Its subcellular location is the nucleus. The catalysed reaction is 5-methylsulfanyl-2,3-dioxopentyl phosphate + H2O = 1,2-dihydroxy-5-(methylsulfanyl)pent-1-en-3-one + phosphate. It participates in amino-acid biosynthesis; L-methionine biosynthesis via salvage pathway; L-methionine from S-methyl-5-thio-alpha-D-ribose 1-phosphate: step 3/6. The protein operates within amino-acid biosynthesis; L-methionine biosynthesis via salvage pathway; L-methionine from S-methyl-5-thio-alpha-D-ribose 1-phosphate: step 4/6. Its function is as follows. Bifunctional enzyme that catalyzes the enolization of 2,3-diketo-5-methylthiopentyl-1-phosphate (DK-MTP-1-P) into the intermediate 2-hydroxy-3-keto-5-methylthiopentenyl-1-phosphate (HK-MTPenyl-1-P), which is then dephosphorylated to form the acireductone 1,2-dihydroxy-3-keto-5-methylthiopentene (DHK-MTPene). In Pyricularia oryzae (strain 70-15 / ATCC MYA-4617 / FGSC 8958) (Rice blast fungus), this protein is Enolase-phosphatase E1.